Reading from the N-terminus, the 501-residue chain is MEALLQLKGIDKAFPGVKALSGAALNVYPGRVMALVGENGAGKSTMMKVLTGIYTRDAGTLLWLGKETTFTGPKSSQEAGIGIIHQELNLIPQLTIAENIFLGREFVNRFGKIDWKTMYAEADKLLAKLNLRFKSDKLVGDLSIGDQQMVEIAKVLSFESKVIIMDEPTDALTDTETESLFRVIRELKSQGRGIVYISHRMKEIFEICDDVTVFRDGQFIAEREVASLTEDSLIEMMVGRKLEDQYPHLDKAPGDIRLKVDNLCGPGVNDVSFTLRKGEILGVSGLMGAGRTELMKVLYGALPRTSGYVTLDGHEVVTRSPQDGLANGIVYISEDRKRDGLVLGMSVKENMSLTALRYFSRAGGSLKHADEQQAVSDFIRLFNVKTPSMEQAIGLLSGGNQQKVAIARGLMTRPKVLILDEPTRGVDVGAKKEIYQLINQFKADGLSIILVSSEMPEVLGMSDRIIVMHEGHLSGEFTREQATQEVLMAAAVGKLNRVNQE.

ABC transporter domains are found at residues 5-241 and 252-495; these read LQLK…VGRK and APGD…VGKL. 37–44 serves as a coordination point for ATP; it reads GENGAGKS.

This sequence belongs to the ABC transporter superfamily. Ribose importer (TC 3.A.1.2.1) family. In terms of assembly, the complex is composed of an ATP-binding protein (RbsA), two transmembrane proteins (RbsC) and a solute-binding protein (RbsB).

It is found in the cell inner membrane. It carries out the reaction D-ribose(out) + ATP + H2O = D-ribose(in) + ADP + phosphate + H(+). Its function is as follows. Part of the ABC transporter complex RbsABC involved in ribose import. Responsible for energy coupling to the transport system. The chain is Ribose import ATP-binding protein RbsA from Escherichia coli (strain K12).